Reading from the N-terminus, the 316-residue chain is HPr kinase/phosphorylase (316 aa).

Active-site residues include His-143 and Lys-164. 158–165 provides a ligand contact to ATP; it reads GEAGSGKS. Ser-165 serves as a coordination point for Mg(2+). Asp-182 functions as the Proton acceptor; for phosphorylation activity. Proton donor; for dephosphorylation activity in the catalytic mechanism. An important for the catalytic mechanism of both phosphorylation and dephosphorylation region spans residues 206-215; the sequence is LEVRGLGVLN. Glu-207 contributes to the Mg(2+) binding site. Residue Arg-251 is part of the active site. Positions 272–277 are important for the catalytic mechanism of dephosphorylation; sequence PVMPGR.

Belongs to the HPrK/P family. Homohexamer. Requires Mg(2+) as cofactor.

The enzyme catalyses [HPr protein]-L-serine + ATP = [HPr protein]-O-phospho-L-serine + ADP + H(+). The catalysed reaction is [HPr protein]-O-phospho-L-serine + phosphate + H(+) = [HPr protein]-L-serine + diphosphate. In terms of biological role, catalyzes the ATP- as well as the pyrophosphate-dependent phosphorylation of a specific serine residue in HPr, a phosphocarrier protein of the phosphoenolpyruvate-dependent sugar phosphotransferase system (PTS). HprK/P also catalyzes the pyrophosphate-producing, inorganic phosphate-dependent dephosphorylation (phosphorolysis) of seryl-phosphorylated HPr (P-Ser-HPr). This chain is HPr kinase/phosphorylase, found in Stenotrophomonas maltophilia (strain R551-3).